We begin with the raw amino-acid sequence, 250 residues long: MAVLGLQGVRGGVGTTTITAALAWSLQMLGENVLVVDACPDNLLRLSFNVDFTHRQGWARAMLDGQDWRDAGLRYTSQLDLLPFGQLSIEEQENPQHWQTRLSDICSGLQQLKASGRYQWILIDLPRDASQITHQLLSLCDHSLAIVNVDANCHIRLHQQALPDGAHILINDFRIGSQVQDDIYQLWLQSQRRLLPMLIHRDEAMAECLAAKQPVGEYRSDALAAEEILTLANWCLLNYSGLKTPVGSAS.

9–16 is a binding site for ATP; that stretch reads VRGGVGTT.

It belongs to the BcsQ family.

The protein localises to the cytoplasm. Its function is as follows. Essential for cellulose biosynthesis, shown for strain 1094, a commensal, natural cellulose producer. Also shown in strain W3110 which has a restored reading frame (TAG stop codon to TTG for amino acid 6, called strain AR3110), this protein. May play a role in subcellular localization of an active cellulose biosynthesis apparatus at the bacterial cell pole. The combination of cellulose and the curli fiber network confer cohesion, elasticity and tissue-like properties to colonies. The chain is Cellulose biosynthesis protein BcsQ from Escherichia coli (strain K12).